Reading from the N-terminus, the 338-residue chain is Malate dehydrogenase, mitochondrial (338 aa).

A mitochondrion-targeting transit peptide spans 1–24 (MLSALARPAGAALRRSFSTSAQNN). NAD(+) contacts are provided by residues 31–37 (GASGGIG) and aspartate 57. A glycan (O-linked (GlcNAc) serine) is linked at serine 33. N6-acetyllysine; alternate occurs at positions 78 and 91. N6-succinyllysine; alternate is present on residues lysine 78 and lysine 91. Substrate-binding residues include arginine 104 and arginine 110. NAD(+) is bound by residues asparagine 117 and 140–142 (IAN). Asparagine 142 contacts substrate. Residue lysine 165 is modified to N6-acetyllysine. Arginine 176 lines the substrate pocket. Residue lysine 185 is modified to N6-acetyllysine; alternate. Position 185 is an N6-succinyllysine; alternate (lysine 185). Histidine 200 serves as the catalytic Proton acceptor. An N6-succinyllysine modification is found at lysine 203. Lysine 215 and lysine 239 each carry N6-acetyllysine; alternate. Lysine 215 and lysine 239 each carry N6-succinyllysine; alternate. Lysine 239 is subject to N6-malonyllysine; alternate. The residue at position 246 (serine 246) is a Phosphoserine. Methionine 251 is a binding site for NAD(+). Position 269 is an N6-succinyllysine (lysine 269). Residues lysine 296, lysine 301, and lysine 307 each carry the N6-acetyllysine; alternate modification. 3 positions are modified to N6-succinyllysine; alternate: lysine 296, lysine 301, and lysine 307. Lysine 307 carries the post-translational modification N6-malonyllysine; alternate. Threonine 309 carries the phosphothreonine modification. An N6-acetyllysine; alternate mark is found at lysine 314 and lysine 324. An N6-succinyllysine; alternate mark is found at lysine 314 and lysine 324. Serine 326 is modified (phosphoserine). Residues lysine 328, lysine 329, and lysine 335 each carry the N6-acetyllysine; alternate modification. Lysine 328 carries the N6-succinyllysine; alternate modification. Residue lysine 329 is modified to N6-malonyllysine; alternate. Residue lysine 335 is modified to N6-succinyllysine; alternate.

The protein belongs to the LDH/MDH superfamily. MDH type 1 family. Homodimer. Post-translationally, acetylation is enhanced after treatment either with trichostin A (TCA) or with nicotinamide (NAM) with the appearance of tri- and tetraacetylations. Glucose also increases acetylation. Acetylation of Lys-239 and Lys-314 is observed in liver mitochondria from fasted mice but not from fed mice.

It is found in the mitochondrion matrix. The catalysed reaction is (S)-malate + NAD(+) = oxaloacetate + NADH + H(+). Enzyme activity is enhanced by acetylation. This is Malate dehydrogenase, mitochondrial (Mdh2) from Mus musculus (Mouse).